Reading from the N-terminus, the 235-residue chain is Serine protease SplA (235 aa).

The first 35 residues, 1–35, serve as a signal peptide directing secretion; sequence MNKNVMVKGLTALTILTSLGFAENISNQPHSIAKA. Residues His-74, Asp-113, and Ser-189 each act as charge relay system in the active site.

Belongs to the peptidase S1B family.

Its subcellular location is the secreted. This chain is Serine protease SplA (splA), found in Staphylococcus aureus (strain Mu3 / ATCC 700698).